Consider the following 71-residue polypeptide: Small ribosomal subunit protein bS18c (71 aa).

It belongs to the bacterial ribosomal protein bS18 family. In terms of assembly, part of the 30S ribosomal subunit.

The protein localises to the plastid. It localises to the chloroplast. The protein is Small ribosomal subunit protein bS18c (rps18) of Mesostigma viride (Green alga).